The primary structure comprises 258 residues: Hydroxyacylglutathione hydrolase (258 aa).

Positions 52, 54, 56, 57, 109, 126, and 164 each coordinate Zn(2+).

It belongs to the metallo-beta-lactamase superfamily. Glyoxalase II family. Monomer. The cofactor is Zn(2+).

The enzyme catalyses an S-(2-hydroxyacyl)glutathione + H2O = a 2-hydroxy carboxylate + glutathione + H(+). It functions in the pathway secondary metabolite metabolism; methylglyoxal degradation; (R)-lactate from methylglyoxal: step 2/2. Thiolesterase that catalyzes the hydrolysis of S-D-lactoyl-glutathione to form glutathione and D-lactic acid. The sequence is that of Hydroxyacylglutathione hydrolase from Xylella fastidiosa (strain M12).